The primary structure comprises 100 residues: Urease subunit gamma (100 aa).

The protein belongs to the urease gamma subunit family. In terms of assembly, heterotrimer of UreA (gamma), UreB (beta) and UreC (alpha) subunits. Three heterotrimers associate to form the active enzyme.

The protein localises to the cytoplasm. It carries out the reaction urea + 2 H2O + H(+) = hydrogencarbonate + 2 NH4(+). Its pathway is nitrogen metabolism; urea degradation; CO(2) and NH(3) from urea (urease route): step 1/1. This chain is Urease subunit gamma, found in Rhodococcus opacus (strain B4).